A 437-amino-acid chain; its full sequence is Carboxypeptidase A6 (437 aa).

A signal peptide spans 1–30 (MKCLGKRRGQAAAFLPLCWLFLKILQPGHS). A propeptide spans 31 to 129 (HLYNNRYAGD…SSLHTQRNRR (99 aa)) (activation peptide). 2 N-linked (GlcNAc...) asparagine glycosylation sites follow: N89 and N153. In terms of domain architecture, Peptidase M14 spans 138–432 (VYHSLEEIQN…LAVKNITMHL (295 aa)). Zn(2+)-binding residues include H196 and E199. Residues 196-199 (HARE), R254, and 271-272 (NR) each bind substrate. A disulfide bridge connects residues C265 and C288. H324 is a binding site for Zn(2+). Substrate is bound by residues 325–326 (AY) and Y376. The Proton donor/acceptor role is filled by E398. N427 carries an N-linked (GlcNAc...) asparagine glycan.

This sequence belongs to the peptidase M14 family. Zn(2+) serves as cofactor. As to expression, expressed in the hippocampus, nucleus raphe, and cortex.

The protein localises to the secreted. The protein resides in the extracellular space. It localises to the extracellular matrix. In terms of biological role, may be involved in the proteolytic inactivation of enkephalins and neurotensin in some brain areas. May convert inactive angiotensin I into the biologically active angiotensin II. Releases a C-terminal amino acid, with preference for large hydrophobic C-terminal amino acids and shows only very weak activity toward small amino acids and histidine. The polypeptide is Carboxypeptidase A6 (CPA6) (Homo sapiens (Human)).